Reading from the N-terminus, the 257-residue chain is Imidazole glycerol phosphate synthase subunit HisF (257 aa).

Catalysis depends on residues Asp11 and Asp130.

It belongs to the HisA/HisF family. In terms of assembly, heterodimer of HisH and HisF.

Its subcellular location is the cytoplasm. It carries out the reaction 5-[(5-phospho-1-deoxy-D-ribulos-1-ylimino)methylamino]-1-(5-phospho-beta-D-ribosyl)imidazole-4-carboxamide + L-glutamine = D-erythro-1-(imidazol-4-yl)glycerol 3-phosphate + 5-amino-1-(5-phospho-beta-D-ribosyl)imidazole-4-carboxamide + L-glutamate + H(+). It participates in amino-acid biosynthesis; L-histidine biosynthesis; L-histidine from 5-phospho-alpha-D-ribose 1-diphosphate: step 5/9. IGPS catalyzes the conversion of PRFAR and glutamine to IGP, AICAR and glutamate. The HisF subunit catalyzes the cyclization activity that produces IGP and AICAR from PRFAR using the ammonia provided by the HisH subunit. This Psychromonas ingrahamii (strain DSM 17664 / CCUG 51855 / 37) protein is Imidazole glycerol phosphate synthase subunit HisF.